We begin with the raw amino-acid sequence, 316 residues long: MDYSKTEETPINEEQGSTNSSESRSNEELFSDCDQQHSSIANEFGLTELPKDDKVYELIYRHCQSKLTSHLSNQFEIVSILKNGFQTPLGQAKLKAFQIYAESVAKKSGSCCGNKAAVAEAARVKYGCCGVEKEELKAILMYGFSNNALCLSPDNAPLQCMIDPSSSCNEDGISFLLFSRIIMGKSEVVCSTSQSYPSSMEFDSGVDSLTSPNKYIIWSTHMNTHVLPEFVVCIKTPSILKRKNPKSPWISFPVLINSISKFLNQSQIRLIHKHYKEHQDRRISRCELIQRLRSITGDSLLVQIIKSVGQKVHKDT.

Residues 1–28 (MDYSKTEETPINEEQGSTNSSESRSNEE) form a disordered region. Low complexity predominate over residues 14-23 (EQGSTNSSES). One can recognise a PARP catalytic domain in the interval 28–255 (ELFSDCDQQH…KSPWISFPVL (228 aa)). In terms of domain architecture, RST spans 243–314 (KNPKSPWISF…IKSVGQKVHK (72 aa)).

It localises to the nucleus. Functionally, probable inactive ADP-ribosyltransferase that may be involved in stress and developmental responses. This is Probable inactive poly [ADP-ribose] polymerase SRO4 (SRO4) from Arabidopsis thaliana (Mouse-ear cress).